A 136-amino-acid chain; its full sequence is Secreted RxLR effector protein 63 (136 aa).

The N-terminal stretch at 1-21 is a signal peptide; it reads MQRFPYSLLLLLLSATNRSRR. A RxLR motif is present at residues 43–46; the sequence is RMLR.

This sequence belongs to the RxLR effector family.

The protein localises to the secreted. It is found in the host nucleus. Functionally, effector that partially suppresses the tobacco programmed cell death induced by cell death-inducing proteins. In Plasmopara viticola (Downy mildew of grapevine), this protein is Secreted RxLR effector protein 63.